A 97-amino-acid chain; its full sequence is Large ribosomal subunit protein bL25 (97 aa).

This sequence belongs to the bacterial ribosomal protein bL25 family. As to quaternary structure, part of the 50S ribosomal subunit; part of the 5S rRNA/L5/L18/L25 subcomplex. Contacts the 5S rRNA. Binds to the 5S rRNA independently of L5 and L18.

This is one of the proteins that binds to the 5S RNA in the ribosome where it forms part of the central protuberance. The sequence is that of Large ribosomal subunit protein bL25 from Blochmanniella pennsylvanica (strain BPEN).